The sequence spans 870 residues: Leucine--tRNA ligase (870 aa).

The short motif at 42 to 52 (PYPSGKLHMGH) is the 'HIGH' region element. A 'KMSKS' region motif is present at residues 629 to 633 (KMSKS). Lys-632 is an ATP binding site.

This sequence belongs to the class-I aminoacyl-tRNA synthetase family.

The protein localises to the cytoplasm. The enzyme catalyses tRNA(Leu) + L-leucine + ATP = L-leucyl-tRNA(Leu) + AMP + diphosphate. This is Leucine--tRNA ligase from Dechloromonas aromatica (strain RCB).